Reading from the N-terminus, the 327-residue chain is Ribosomal RNA small subunit methyltransferase H (327 aa).

Residues 42–44 (GGH), D61, L95, D109, and Q116 each bind S-adenosyl-L-methionine.

It belongs to the methyltransferase superfamily. RsmH family.

It is found in the cytoplasm. It carries out the reaction cytidine(1402) in 16S rRNA + S-adenosyl-L-methionine = N(4)-methylcytidine(1402) in 16S rRNA + S-adenosyl-L-homocysteine + H(+). Specifically methylates the N4 position of cytidine in position 1402 (C1402) of 16S rRNA. In Desulfovibrio desulfuricans (strain ATCC 27774 / DSM 6949 / MB), this protein is Ribosomal RNA small subunit methyltransferase H.